Reading from the N-terminus, the 797-residue chain is Interphotoreceptor matrix proteoglycan 1 (797 aa).

A signal peptide spans 1-20; sequence MYLETRRAIFVFWIFLQVQG. N-linked (GlcNAc...) asparagine glycosylation is found at Asn-42, Asn-143, Asn-191, and Asn-215. Positions 232–354 constitute an SEA 1 domain; the sequence is EEQRVELSVS…QPEIYLTATD (123 aa). Residues Thr-403, Thr-421, Thr-432, and Thr-442 are each glycosylated (O-linked (GalNAc...) threonine). In terms of domain architecture, SEA 2 spans 571-684; sequence RELVVFFSLR…YSLNIEPADQ (114 aa). 2 N-linked (GlcNAc...) asparagine glycosylation sites follow: Asn-592 and Asn-616. The Heparin- and hyaluronan-binding signature appears at 621-629; it reads KQLEILNFR. N-linked (GlcNAc...) asparagine glycans are attached at residues Asn-630 and Asn-648.

Post-translationally, the N-terminus is blocked. In terms of processing, highly glycosylated (N- and O-linked carbohydrates and sialic acid). As to expression, expressed in the retina (at protein level). In the retina, specifically expressed by cone and rod photoreceptor cells. Localizes to cone and rod photoreceptor cells surrounding the interphotoreceptor matrix of the retina.

It is found in the cell projection. The protein resides in the cilium. The protein localises to the photoreceptor outer segment. Its subcellular location is the secreted. It localises to the extracellular space. It is found in the extracellular matrix. The protein resides in the interphotoreceptor matrix. The protein localises to the photoreceptor inner segment. In terms of biological role, chondroitin sulfate-, heparin- and hyaluronan-binding protein. May serve to form a basic macromolecular scaffold comprising the insoluble interphotoreceptor matrix. In Homo sapiens (Human), this protein is Interphotoreceptor matrix proteoglycan 1.